Here is a 286-residue protein sequence, read N- to C-terminus: Bifunctional protein FolD (286 aa).

Residues 165 to 167 (GRS), serine 190, and valine 231 contribute to the NADP(+) site.

The protein belongs to the tetrahydrofolate dehydrogenase/cyclohydrolase family. In terms of assembly, homodimer.

The catalysed reaction is (6R)-5,10-methylene-5,6,7,8-tetrahydrofolate + NADP(+) = (6R)-5,10-methenyltetrahydrofolate + NADPH. It catalyses the reaction (6R)-5,10-methenyltetrahydrofolate + H2O = (6R)-10-formyltetrahydrofolate + H(+). The protein operates within one-carbon metabolism; tetrahydrofolate interconversion. Its function is as follows. Catalyzes the oxidation of 5,10-methylenetetrahydrofolate to 5,10-methenyltetrahydrofolate and then the hydrolysis of 5,10-methenyltetrahydrofolate to 10-formyltetrahydrofolate. This chain is Bifunctional protein FolD, found in Bacillus cytotoxicus (strain DSM 22905 / CIP 110041 / 391-98 / NVH 391-98).